A 539-amino-acid chain; its full sequence is DnaJ homolog subfamily C member 7 homolog (539 aa).

6 TPR repeats span residues 3–36, 75–108, 189–222, 235–268, 273–306, and 307–340; these read HEECKTQGNNYFKQSQYMDAIRCYTQAIELSNGT, IKGYTRASKAYIHLAQYDQAASIIVRGLVFDPRN, PEYLYVRGLSLYYQNNFPLALQHFQNSLTYDPDY, IESKKKEGNEYFQSKNYQAAYDSFTEALSIDPKL, SQLYSNRAAALVHLNRISEAINDCTSAVTIDPNY, and GKAYIRRAQCQMKQENYEDAVRDYEKAQSLDPEN. One can recognise a J domain in the interval 361–431; sequence DYYKILGVSK…KKKRQYDMGQ (71 aa). The interval 512-539 is disordered; that stretch reads MGGGFGGHSGHSHGGSRSRSSRGGNEYR. Residues 521–531 show a composition bias toward basic residues; that stretch reads GHSHGGSRSRS.

This chain is DnaJ homolog subfamily C member 7 homolog (dnajc7), found in Dictyostelium discoideum (Social amoeba).